A 479-amino-acid polypeptide reads, in one-letter code: 5-hydroxytryptamine receptor 2B (479 aa).

The Extracellular segment spans residues 1–55 (MASSYKMSEQSTTSEHILQKTCDHLILTNRSGLETDSVAEEMKQTVEGQGHTVHW). Asparagine 29 carries an N-linked (GlcNAc...) asparagine glycan. Residues 56–78 (AALLILAVIIPTIGGNILVILAV) form a helical membrane-spanning segment. The Cytoplasmic portion of the chain corresponds to 79–89 (ALEKRLQYATN). Residues 90 to 112 (YFLMSLAIADLLVGLFVMPIALL) form a helical membrane-spanning segment. The Extracellular segment spans residues 113 to 128 (TIMFEAIWPLPLALCP). Cysteine 127 and cysteine 206 are joined by a disulfide. The helical transmembrane segment at 129-150 (AWLFLDVLFSTASIMHLCAISL) threads the bilayer. Residues aspartate 134 and threonine 139 each coordinate ergotamine. Positions 151 to 153 (DRY) match the DRY motif; important for ligand-induced conformation changes motif. At 151-170 (DRYIAIKKPIQANQCNSRAT) the chain is on the cytoplasmic side. A helical membrane pass occupies residues 171–191 (AFIKITVVWLISIGIAIPVPI). The Extracellular portion of the chain corresponds to 192-215 (KGIETDVINPHNVTCELTKDRFGS). Residue leucine 208 participates in ergotamine binding. The short motif at 211-214 (DRFG) is the [DE]RFG motif; may stabilize a conformation that preferentially activates signaling via beta-arrestin family members element. Residues 216 to 238 (FMVFGSLAAFFAPLTIMVVTYFL) traverse the membrane as a helical segment. Over 239–323 (TIHTLQKKAY…TISNEQRASK (85 aa)) the chain is Cytoplasmic. A helical transmembrane segment spans residues 324-344 (ALGVVFFLFLLMWCPFFITNL). Residues 345–359 (TLALCDSCNQTTLKT) lie on the Extracellular side of the membrane. Cysteine 349 and cysteine 352 are joined by a disulfide. A helical membrane pass occupies residues 360–381 (LLEIFVWIGYVSSGVNPLIYTL). The NPxxY motif; important for ligand-induced conformation changes and signaling signature appears at 375–379 (NPLIY). At 382-479 (FNKTFREAFG…DKAEEQVSYI (98 aa)) the chain is on the cytoplasmic side. A lipid anchor (S-palmitoyl cysteine) is attached at cysteine 396. The short motif at 477–479 (SYI) is the PDZ-binding element.

This sequence belongs to the G-protein coupled receptor 1 family. Interacts (via C-terminus) with MPDZ. In terms of tissue distribution, ubiquitous. Detected in intestine, heart, skeletal muscle, testis, urinary bladder, stomach, liver, lung, brain and kidney. Detected in osteoblasts. Detected in the raphe nucleus in the brain, in dorsal root ganglion neurons, the brain stem, cerebellum and spinal cord. Detected in interstitial cells of Cajal in the small intestine.

The protein resides in the cell membrane. It localises to the synapse. Its subcellular location is the synaptosome. Functionally, G-protein coupled receptor for 5-hydroxytryptamine (serotonin). Also functions as a receptor for various ergot alkaloid derivatives and psychoactive substances. Ligand binding causes a conformation change that triggers signaling via guanine nucleotide-binding proteins (G proteins) and modulates the activity of downstream effectors. HTR2B is coupled to G(q)/G(11) G alpha proteins and activates phospholipase C-beta, releasing diacylglycerol (DAG) and inositol 1,4,5-trisphosphate (IP3) second messengers that modulate the activity of phosphatidylinositol 3-kinase and promote the release of Ca(2+) ions from intracellular stores, respectively. Beta-arrestin family members inhibit signaling via G proteins and mediate activation of alternative signaling pathways. Plays a role in the regulation of dopamine and 5-hydroxytryptamine release, 5-hydroxytryptamine uptake and in the regulation of extracellular dopamine and 5-hydroxytryptamine levels, and thereby affects neural activity. May play a role in the perception of pain. Plays a role in the regulation of behavior, including impulsive behavior. Required for normal proliferation of embryonic cardiac myocytes and normal heart development. Protects cardiomyocytes against apoptosis. Plays a role in the adaptation of pulmonary arteries to chronic hypoxia. Plays a role in vasoconstriction. Required for normal osteoblast function and proliferation, and for maintaining normal bone density. Required for normal proliferation of the interstitial cells of Cajal in the intestine. The sequence is that of 5-hydroxytryptamine receptor 2B (Htr2b) from Mus musculus (Mouse).